Reading from the N-terminus, the 134-residue chain is Large ribosomal subunit protein bL20 (134 aa).

It belongs to the bacterial ribosomal protein bL20 family.

In terms of biological role, binds directly to 23S ribosomal RNA and is necessary for the in vitro assembly process of the 50S ribosomal subunit. It is not involved in the protein synthesizing functions of that subunit. The chain is Large ribosomal subunit protein bL20 from Sinorhizobium medicae (strain WSM419) (Ensifer medicae).